The primary structure comprises 372 residues: Sesquiterpene synthase Agr9 (372 aa).

Mg(2+) is bound by residues D87, N225, S229, and E233. A DDXXD motif motif is present at residues 87–91 (DEYTD). (2E,6E)-farnesyl diphosphate contacts are provided by R314 and Y315.

The protein belongs to the terpene synthase family. The cofactor is Mg(2+).

The catalysed reaction is (2E,6E)-farnesyl diphosphate = gamma-muurolene + diphosphate. It carries out the reaction (2E,6E)-farnesyl diphosphate = delta-cadinene + diphosphate. Its function is as follows. Terpene cyclase that catalyzes the cyclization of farnesyl diphosphate (FPP) to various sesquiterpenes, including gamma-muurolene, beta-cadinene and delta-cadinene. This Cyclocybe aegerita (Black poplar mushroom) protein is Sesquiterpene synthase Agr9.